The sequence spans 777 residues: C6 finger domain transcription factor adaR (777 aa).

The tract at residues 1-20 (MEQRSSPARSLPPRKTTTTP) is disordered. Residues 24–50 (CELCRKRKVKCDKLTPCTNCAASGTVC) constitute a DNA-binding region (zn(2)-C6 fungal-type). 6 disordered regions span residues 61-85 (GRHA…TDRI), 111-144 (NSHS…NPNT), 182-213 (SSLA…VLGL), 419-440 (PQHI…PNRE), 468-496 (RKVD…DPSW), and 655-699 (LPPS…PTGS). A compositionally biased stretch (low complexity) spans 475-489 (PTPTSSTSGTSTSRS). The span at 668–677 (ATPPTFPGVP) shows a compositional bias: pro residues.

Its subcellular location is the nucleus. Functionally, transcription factor that specifically regulates the expression of the ada gene cluster involved in the biosynthesis of the linear tetracyclic TAN-1612 neuropeptide Y receptor antagonist. The polypeptide is C6 finger domain transcription factor adaR (Aspergillus niger (strain ATCC MYA-4892 / CBS 513.88 / FGSC A1513)).